The primary structure comprises 556 residues: Copine-7 (556 aa).

C2 domains follow at residues 1–128 and 135–262; these read MSGD…TRPL and NAGK…AQWD. Residues aspartate 168, aspartate 174, aspartate 230, aspartate 232, and aspartate 238 each contribute to the Ca(2+) site. Residues 305-504 enclose the VWFA domain; that stretch reads HCTVAIDFTA…PALRDIVQFV (200 aa). The tract at residues 536–556 is disordered; sequence KDLPPRSLGGQTGEAGPSSAP.

Belongs to the copine family. Ca(2+) is required as a cofactor.

The protein localises to the cytoplasm. The protein resides in the nucleus. Its subcellular location is the cell membrane. In terms of biological role, calcium-dependent phospholipid-binding protein that may play a role in calcium-mediated intracellular processes. The sequence is that of Copine-7 from Rattus norvegicus (Rat).